We begin with the raw amino-acid sequence, 201 residues long: Peptide deformylase (201 aa).

Residues Cys121 and His163 each contribute to the Fe cation site. Residue Glu164 is part of the active site. His167 lines the Fe cation pocket.

This sequence belongs to the polypeptide deformylase family. Requires Fe(2+) as cofactor.

The catalysed reaction is N-terminal N-formyl-L-methionyl-[peptide] + H2O = N-terminal L-methionyl-[peptide] + formate. In terms of biological role, removes the formyl group from the N-terminal Met of newly synthesized proteins. Requires at least a dipeptide for an efficient rate of reaction. N-terminal L-methionine is a prerequisite for activity but the enzyme has broad specificity at other positions. The sequence is that of Peptide deformylase from Parasynechococcus marenigrum (strain WH8102).